Consider the following 544-residue polypeptide: CTP synthase (544 aa).

Residues 1–266 (MKYIFVTGGV…GKAVEELLGL (266 aa)) are amidoligase domain. Ser12 contributes to the CTP binding site. Ser12 provides a ligand contact to UTP. Residue 13-18 (SLGKGV) coordinates ATP. Tyr53 provides a ligand contact to L-glutamine. Asp70 is an ATP binding site. 2 residues coordinate Mg(2+): Asp70 and Glu140. CTP-binding positions include 147-149 (DIE), 187-192 (KTKPTQ), and Lys223. Residues 187–192 (KTKPTQ) and Lys223 each bind UTP. The 254-residue stretch at 291-544 (TIAIAGKYTA…VKAALEHQQQ (254 aa)) folds into the Glutamine amidotransferase type-1 domain. Gly356 lines the L-glutamine pocket. The Nucleophile; for glutamine hydrolysis role is filled by Cys383. Residues 384-387 (LGMQ), Glu407, and Arg467 contribute to the L-glutamine site. Catalysis depends on residues His517 and Glu519.

Belongs to the CTP synthase family. As to quaternary structure, homotetramer.

It catalyses the reaction UTP + L-glutamine + ATP + H2O = CTP + L-glutamate + ADP + phosphate + 2 H(+). The catalysed reaction is L-glutamine + H2O = L-glutamate + NH4(+). The enzyme catalyses UTP + NH4(+) + ATP = CTP + ADP + phosphate + 2 H(+). It participates in pyrimidine metabolism; CTP biosynthesis via de novo pathway; CTP from UDP: step 2/2. Allosterically activated by GTP, when glutamine is the substrate; GTP has no effect on the reaction when ammonia is the substrate. The allosteric effector GTP functions by stabilizing the protein conformation that binds the tetrahedral intermediate(s) formed during glutamine hydrolysis. Inhibited by the product CTP, via allosteric rather than competitive inhibition. Catalyzes the ATP-dependent amination of UTP to CTP with either L-glutamine or ammonia as the source of nitrogen. Regulates intracellular CTP levels through interactions with the four ribonucleotide triphosphates. This Deinococcus radiodurans (strain ATCC 13939 / DSM 20539 / JCM 16871 / CCUG 27074 / LMG 4051 / NBRC 15346 / NCIMB 9279 / VKM B-1422 / R1) protein is CTP synthase.